The sequence spans 170 residues: Urease accessory protein UreE (170 aa).

Belongs to the UreE family.

The protein localises to the cytoplasm. Functionally, involved in urease metallocenter assembly. Binds nickel. Probably functions as a nickel donor during metallocenter assembly. This is Urease accessory protein UreE from Helicobacter pylori (strain J99 / ATCC 700824) (Campylobacter pylori J99).